The sequence spans 432 residues: Protein distal antenna-related (432 aa).

In terms of domain architecture, HTH psq-type spans threonine 15–leucine 66. The H-T-H motif DNA-binding region spans lysine 42–asparagine 62. Disordered regions lie at residues glutamate 195 to lysine 221 and serine 401 to glutamine 432. 2 stretches are compositionally biased toward polar residues: residues lysine 202 to threonine 211 and serine 401 to alanine 425.

Interacts with itself, dan, ey and dac to form a complex (or complexes) containing the RD factors.

The protein resides in the nucleus. In terms of biological role, probable transcription factor with a role in the retinal determination (RD) network. Regulates ato expression and is required for normal R8 induction and differentiation. Danr appears to repress Dan expression, but Dan is required for Danr expression anterior to the morphogenetic furrow (MF). Dan and Danr lie downstream of so and require dac function for highest levels of expression. Contributes to differentiation of antenna-specific characteristics; effector gene that acts downstream of homothorax (hth), Distal-less (Dll), cut (ct) and spineless (ss) genes to control differentiation of distal antennal structures. This chain is Protein distal antenna-related, found in Drosophila pseudoobscura pseudoobscura (Fruit fly).